The following is a 73-amino-acid chain: Large ribosomal subunit protein bL31 (73 aa).

The protein belongs to the bacterial ribosomal protein bL31 family. Type A subfamily. Part of the 50S ribosomal subunit. Contacts protein L9.

Binds the 23S rRNA and interacts with the tRNA in the E site. This is Large ribosomal subunit protein bL31 (rpmE) from Deinococcus radiodurans (strain ATCC 13939 / DSM 20539 / JCM 16871 / CCUG 27074 / LMG 4051 / NBRC 15346 / NCIMB 9279 / VKM B-1422 / R1).